Here is a 101-residue protein sequence, read N- to C-terminus: MCALFAEVSSTAAASCSFGVLLCSGSNCGRLVGSERRKVLYVFNVNVCKKMSSYYFLRHDNIVIPYLLRLLVSDKEASNKNPLLPFLMDKERSHHFVRNMN.

This is an uncharacterized protein from Saccharomyces cerevisiae (strain ATCC 204508 / S288c) (Baker's yeast).